The sequence spans 391 residues: ATP phosphoribosyltransferase regulatory subunit (391 aa).

The protein belongs to the class-II aminoacyl-tRNA synthetase family. HisZ subfamily. In terms of assembly, heteromultimer composed of HisG and HisZ subunits.

The protein localises to the cytoplasm. It functions in the pathway amino-acid biosynthesis; L-histidine biosynthesis; L-histidine from 5-phospho-alpha-D-ribose 1-diphosphate: step 1/9. In terms of biological role, required for the first step of histidine biosynthesis. May allow the feedback regulation of ATP phosphoribosyltransferase activity by histidine. The protein is ATP phosphoribosyltransferase regulatory subunit of Prochlorococcus marinus (strain NATL1A).